Here is a 438-residue protein sequence, read N- to C-terminus: Fibrinogen gamma chain (438 aa).

Positions methionine 1 to isoleucine 25 are cleaved as a signal peptide. N-linked (GlcNAc...) asparagine glycosylation is present at asparagine 76. The Fibrinogen C-terminal domain occupies glutamine 167–asparagine 414. Cysteine 176 and cysteine 205 are oxidised to a cystine. Ca(2+) contacts are provided by aspartate 341, aspartate 343, and glycine 347. Cysteine 349 and cysteine 362 are disulfide-bonded.

As to quaternary structure, heterohexamer; disulfide linked. Contains 2 sets of 3 non-identical chains (alpha, beta and gamma). The 2 heterotrimers are in head to head conformation with the N-termini in a small central domain. In terms of processing, conversion of fibrinogen to fibrin is triggered by thrombin, which cleaves fibrinopeptides A and B from alpha and beta chains, and thus exposes the N-terminal polymerization sites responsible for the formation of the soft clot. The soft clot is converted into the hard clot by factor XIIIA which catalyzes the epsilon-(gamma-glutamyl)lysine cross-linking between gamma chains (stronger) and between alpha chains (weaker) of different monomers.

Its subcellular location is the secreted. Together with fibrinogen alpha (FGA) and fibrinogen beta (FGB), polymerizes to form an insoluble fibrin matrix. Has a major function in hemostasis as one of the primary components of blood clots. This Xenopus laevis (African clawed frog) protein is Fibrinogen gamma chain (fgg).